A 195-amino-acid chain; its full sequence is dITP/XTP pyrophosphatase (195 aa).

Position 8-13 (8-13 (SGNAGK)) interacts with substrate. Positions 38 and 67 each coordinate Mg(2+). The Proton acceptor role is filled by D67. Substrate contacts are provided by residues S68, 146–149 (FGYD), K169, and 174–175 (HR).

The protein belongs to the HAM1 NTPase family. Homodimer. The cofactor is Mg(2+).

It catalyses the reaction XTP + H2O = XMP + diphosphate + H(+). The enzyme catalyses dITP + H2O = dIMP + diphosphate + H(+). It carries out the reaction ITP + H2O = IMP + diphosphate + H(+). Its function is as follows. Pyrophosphatase that catalyzes the hydrolysis of nucleoside triphosphates to their monophosphate derivatives, with a high preference for the non-canonical purine nucleotides XTP (xanthosine triphosphate), dITP (deoxyinosine triphosphate) and ITP. Seems to function as a house-cleaning enzyme that removes non-canonical purine nucleotides from the nucleotide pool, thus preventing their incorporation into DNA/RNA and avoiding chromosomal lesions. The chain is dITP/XTP pyrophosphatase from Parasynechococcus marenigrum (strain WH8102).